Reading from the N-terminus, the 168-residue chain is Photosystem I assembly protein Ycf3 (168 aa).

TPR repeat units follow at residues 35-68 (AFTY…EIDP), 72-105 (SYIL…NPFL), and 120-153 (GEQA…TPGN).

It belongs to the Ycf3 family.

The protein localises to the plastid. Its subcellular location is the chloroplast thylakoid membrane. Its function is as follows. Essential for the assembly of the photosystem I (PSI) complex. May act as a chaperone-like factor to guide the assembly of the PSI subunits. The chain is Photosystem I assembly protein Ycf3 from Ipomoea purpurea (Common morning glory).